The chain runs to 600 residues: Elongation factor 4 (600 aa).

One can recognise a tr-type G domain in the interval 5–187; the sequence is KYIRNFSIIA…AIINKLPSPK (183 aa). GTP contacts are provided by residues 17-22 and 134-137; these read DHGKST and NKID.

It belongs to the TRAFAC class translation factor GTPase superfamily. Classic translation factor GTPase family. LepA subfamily.

Its subcellular location is the cell inner membrane. The catalysed reaction is GTP + H2O = GDP + phosphate + H(+). Its function is as follows. Required for accurate and efficient protein synthesis under certain stress conditions. May act as a fidelity factor of the translation reaction, by catalyzing a one-codon backward translocation of tRNAs on improperly translocated ribosomes. Back-translocation proceeds from a post-translocation (POST) complex to a pre-translocation (PRE) complex, thus giving elongation factor G a second chance to translocate the tRNAs correctly. Binds to ribosomes in a GTP-dependent manner. The polypeptide is Elongation factor 4 (Rickettsia typhi (strain ATCC VR-144 / Wilmington)).